The chain runs to 315 residues: DNA-directed RNA polymerase subunit alpha (315 aa).

An alpha N-terminal domain (alpha-NTD) region spans residues 1-228; the sequence is MLEIEKPKIE…EHLRLFVGLT (228 aa). Residues 245–315 form an alpha C-terminal domain (alpha-CTD) region; sequence KNKLLEMPIE…LGLDLRHDEE (71 aa).

The protein belongs to the RNA polymerase alpha chain family. As to quaternary structure, homodimer. The RNAP catalytic core consists of 2 alpha, 1 beta, 1 beta' and 1 omega subunit. When a sigma factor is associated with the core the holoenzyme is formed, which can initiate transcription.

The catalysed reaction is RNA(n) + a ribonucleoside 5'-triphosphate = RNA(n+1) + diphosphate. DNA-dependent RNA polymerase catalyzes the transcription of DNA into RNA using the four ribonucleoside triphosphates as substrates. This Desulforudis audaxviator (strain MP104C) protein is DNA-directed RNA polymerase subunit alpha.